Reading from the N-terminus, the 95-residue chain is uncharacterized protein (95 aa).

This is an uncharacterized protein from Enterobacteria phage T4 (Bacteriophage T4).